A 367-amino-acid chain; its full sequence is Alanine racemase (367 aa).

Residue lysine 40 is the Proton acceptor; specific for D-alanine of the active site. Lysine 40 bears the N6-(pyridoxal phosphate)lysine mark. Arginine 136 serves as a coordination point for substrate. Tyrosine 263 serves as the catalytic Proton acceptor; specific for L-alanine. A substrate-binding site is contributed by methionine 310.

The protein belongs to the alanine racemase family. Requires pyridoxal 5'-phosphate as cofactor.

It carries out the reaction L-alanine = D-alanine. The protein operates within amino-acid biosynthesis; D-alanine biosynthesis; D-alanine from L-alanine: step 1/1. Catalyzes the interconversion of L-alanine and D-alanine. May also act on other amino acids. The chain is Alanine racemase (alr) from Lactococcus lactis subsp. cremoris (strain MG1363).